The following is a 479-amino-acid chain: Aspartyl/glutamyl-tRNA(Asn/Gln) amidotransferase subunit B (479 aa).

It belongs to the GatB/GatE family. GatB subfamily. In terms of assembly, heterotrimer of A, B and C subunits.

The catalysed reaction is L-glutamyl-tRNA(Gln) + L-glutamine + ATP + H2O = L-glutaminyl-tRNA(Gln) + L-glutamate + ADP + phosphate + H(+). The enzyme catalyses L-aspartyl-tRNA(Asn) + L-glutamine + ATP + H2O = L-asparaginyl-tRNA(Asn) + L-glutamate + ADP + phosphate + 2 H(+). Allows the formation of correctly charged Asn-tRNA(Asn) or Gln-tRNA(Gln) through the transamidation of misacylated Asp-tRNA(Asn) or Glu-tRNA(Gln) in organisms which lack either or both of asparaginyl-tRNA or glutaminyl-tRNA synthetases. The reaction takes place in the presence of glutamine and ATP through an activated phospho-Asp-tRNA(Asn) or phospho-Glu-tRNA(Gln). This Streptococcus mutans serotype c (strain ATCC 700610 / UA159) protein is Aspartyl/glutamyl-tRNA(Asn/Gln) amidotransferase subunit B.